Here is a 165-residue protein sequence, read N- to C-terminus: Protein SprT (165 aa).

Residues 20 to 162 (EKLAQANLKL…YRCVHCGEQL (143 aa)) form the SprT-like domain. His-78 contributes to the Zn(2+) binding site. Glu-79 is an active-site residue. His-82 contributes to the Zn(2+) binding site.

Belongs to the SprT family. The cofactor is Zn(2+).

It is found in the cytoplasm. The protein is Protein SprT of Escherichia coli (strain SMS-3-5 / SECEC).